The sequence spans 212 residues: ATP-dependent dethiobiotin synthetase BioD (212 aa).

Residue 13 to 18 participates in ATP binding; it reads GIGKTV. Residue Thr-17 coordinates Mg(2+). Residue Lys-33 is part of the active site. Ser-37 provides a ligand contact to substrate. Residue Glu-100 participates in Mg(2+) binding. ATP contacts are provided by residues 100-103 and 184-186; these read EGAG and PRL.

This sequence belongs to the dethiobiotin synthetase family. As to quaternary structure, homodimer. Mg(2+) is required as a cofactor.

It localises to the cytoplasm. It carries out the reaction (7R,8S)-7,8-diammoniononanoate + CO2 + ATP = (4R,5S)-dethiobiotin + ADP + phosphate + 3 H(+). It participates in cofactor biosynthesis; biotin biosynthesis; biotin from 7,8-diaminononanoate: step 1/2. In terms of biological role, catalyzes a mechanistically unusual reaction, the ATP-dependent insertion of CO2 between the N7 and N8 nitrogen atoms of 7,8-diaminopelargonic acid (DAPA, also called 7,8-diammoniononanoate) to form a ureido ring. In Agrobacterium fabrum (strain C58 / ATCC 33970) (Agrobacterium tumefaciens (strain C58)), this protein is ATP-dependent dethiobiotin synthetase BioD.